Reading from the N-terminus, the 234-residue chain is Ribosomal RNA large subunit methyltransferase E (234 aa).

The segment at 1 to 37 is disordered; that stretch reads MSDDDRRRWKGPGPERQDSGRRSTERKVIARNARTES. S-adenosyl-L-methionine is bound by residues glycine 91, tryptophan 93, aspartate 109, aspartate 125, and aspartate 149. Residue lysine 189 is the Proton acceptor of the active site.

The protein belongs to the class I-like SAM-binding methyltransferase superfamily. RNA methyltransferase RlmE family.

It is found in the cytoplasm. It catalyses the reaction uridine(2552) in 23S rRNA + S-adenosyl-L-methionine = 2'-O-methyluridine(2552) in 23S rRNA + S-adenosyl-L-homocysteine + H(+). In terms of biological role, specifically methylates the uridine in position 2552 of 23S rRNA at the 2'-O position of the ribose in the fully assembled 50S ribosomal subunit. This chain is Ribosomal RNA large subunit methyltransferase E, found in Hyphomonas neptunium (strain ATCC 15444).